We begin with the raw amino-acid sequence, 255 residues long: Small ribosomal subunit protein eS4 (255 aa).

The region spanning 44–107 (IPLLILVRDV…DEYYRMIPYP (64 aa)) is the S4 RNA-binding domain.

The protein belongs to the eukaryotic ribosomal protein eS4 family.

The protein is Small ribosomal subunit protein eS4 of Ignicoccus hospitalis (strain KIN4/I / DSM 18386 / JCM 14125).